Reading from the N-terminus, the 181-residue chain is MMQPLYLVGPRGCGKTTIGMALAQATGFRFADTDRWLQSHVQMSVADIVEKEGWGGFRARETAALEAVSAPSTVVATGGGIILTEYNRRYMHRVGVVIYLCAPVSTLVNRLEAEPEADLRPTLTGKPLSEEVREVLEQRDALYRETAHYIIDATKAPAQVVSEIIAALPPSTQRLQGDVYT.

ATP is bound at residue 12-17 (GCGKTT). Residues Thr-16 and Asp-32 each coordinate Mg(2+). Substrate-binding residues include Asp-34, Arg-58, and Gly-79. Residues 112 to 126 (EAEPEADLRPTLTGK) form an LID domain region. ATP is bound at residue Arg-120. Position 139 (Arg-139) interacts with substrate.

This sequence belongs to the shikimate kinase family. AroL subfamily. As to quaternary structure, monomer. Mg(2+) serves as cofactor.

It is found in the cytoplasm. It carries out the reaction shikimate + ATP = 3-phosphoshikimate + ADP + H(+). It participates in metabolic intermediate biosynthesis; chorismate biosynthesis; chorismate from D-erythrose 4-phosphate and phosphoenolpyruvate: step 5/7. Catalyzes the specific phosphorylation of the 3-hydroxyl group of shikimic acid using ATP as a cosubstrate. In Salmonella enteritidis PT4 (strain P125109), this protein is Shikimate kinase 2.